Here is a 679-residue protein sequence, read N- to C-terminus: Acetyl-coenzyme A synthetase 2 (679 aa).

Residues 1–32 form a disordered region; that stretch reads MTSSPTHQVVHEANNIKKQETPKEFFERQPRQ. Over residues 14-30 the composition is skewed to basic and acidic residues; that stretch reads NNIKKQETPKEFFERQP. Residues 207–210 and Thr326 each bind CoA; that span reads RGGK. ATP contacts are provided by residues 402 to 404, 426 to 431, Asp517, and Arg532; these read GEP and DTYWQT. Ser540 lines the CoA pocket. Arg543 contributes to the ATP binding site. Arg611 contributes to the CoA binding site.

It belongs to the ATP-dependent AMP-binding enzyme family.

It catalyses the reaction acetate + ATP + CoA = acetyl-CoA + AMP + diphosphate. This is Acetyl-coenzyme A synthetase 2 (ACS2) from Debaryomyces hansenii (strain ATCC 36239 / CBS 767 / BCRC 21394 / JCM 1990 / NBRC 0083 / IGC 2968) (Yeast).